The chain runs to 128 residues: Profilin (128 aa).

This sequence belongs to the profilin family.

More likely to influence phosphoinositide metabolism than actin assembly. The protein is Profilin of Homo sapiens (Human).